The chain runs to 91 residues: C-C motif chemokine 5 (91 aa).

The N-terminal stretch at 1 to 23 (MKISAAVLTVVLMAASLCAPASA) is a signal peptide. Cystine bridges form between Cys-33–Cys-57 and Cys-34–Cys-73.

Belongs to the intercrine beta (chemokine CC) family.

The protein localises to the secreted. In terms of biological role, chemoattractant for blood monocytes, memory T-helper cells and eosinophils. Causes the release of histamine from basophils and activates eosinophils. May activate several chemokine receptors including CCR1, CCR3, CCR4 and CCR5. May also be an agonist of the G protein-coupled receptor GPR75. Together with GPR75, may play a role in neuron survival through activation of a downstream signaling pathway involving the PI3, Akt and MAP kinases. By activating GPR75 may also play a role in insulin secretion by islet cells. The polypeptide is C-C motif chemokine 5 (CCL5) (Sigmodon hispidus (Hispid cotton rat)).